The sequence spans 134 residues: Zinc finger protein 593 (134 aa).

The span at 1–25 (MGRSRRTGAHRAHSLARQMKAKRRR) shows a compositional bias: basic residues. 2 disordered regions span residues 1 to 57 (MGRS…DLPG) and 82 to 134 (SKDH…DTST). Residues 26 to 36 (PDLDEIHRELR) show a composition bias toward basic and acidic residues. The C2H2-type zinc finger occupies 61 to 85 (HRCLACARYFIDSTNLKTHFRSKDH).

This sequence belongs to the ZNF593/BUD20 C2H2-type zinc-finger protein family. In terms of assembly, associates with pre-60S ribosomal particles. As to expression, ubiquitous. Detected in spleen, prostate, testis, small intestine, colon and to a minor level in thymus and peripheral blood leukocytes.

Its subcellular location is the nucleus. The protein resides in the nucleolus. It localises to the cytoplasm. In terms of biological role, involved in pre-60S ribosomal particles maturation by promoting the nuclear export of the 60S ribosome. Negatively modulates the DNA binding activity of Oct-2 and therefore its transcriptional regulatory activity. The protein is Zinc finger protein 593 (ZNF593) of Homo sapiens (Human).